The following is a 301-amino-acid chain: tRNA pseudouridine synthase B (301 aa).

D45 acts as the Nucleophile in catalysis.

The protein belongs to the pseudouridine synthase TruB family. Type 1 subfamily.

It catalyses the reaction uridine(55) in tRNA = pseudouridine(55) in tRNA. In terms of biological role, responsible for synthesis of pseudouridine from uracil-55 in the psi GC loop of transfer RNAs. The sequence is that of tRNA pseudouridine synthase B from Streptomyces avermitilis (strain ATCC 31267 / DSM 46492 / JCM 5070 / NBRC 14893 / NCIMB 12804 / NRRL 8165 / MA-4680).